The primary structure comprises 127 residues: Glycine cleavage system H protein (127 aa).

The Lipoyl-binding domain occupies 22–104; the sequence is EAVIGITHFA…YTEGWMLRVK (83 aa). Residue Lys63 is modified to N6-lipoyllysine.

This sequence belongs to the GcvH family. As to quaternary structure, the glycine cleavage system is composed of four proteins: P, T, L and H. The cofactor is (R)-lipoate.

Its function is as follows. The glycine cleavage system catalyzes the degradation of glycine. The H protein shuttles the methylamine group of glycine from the P protein to the T protein. In Nitratidesulfovibrio vulgaris (strain DP4) (Desulfovibrio vulgaris), this protein is Glycine cleavage system H protein.